The primary structure comprises 344 residues: 4-dimethylallyltryptophan N-methyltransferase easF (344 aa).

Belongs to the methyltransferase superfamily. Homodimer.

The catalysed reaction is 4-(3-methylbut-2-enyl)-L-tryptophan + S-adenosyl-L-methionine = 4-(3-methylbut-2-enyl)-L-abrine + S-adenosyl-L-homocysteine + H(+). It functions in the pathway alkaloid biosynthesis; ergot alkaloid biosynthesis. In terms of biological role, 4-dimethylallyltryptophan N-methyltransferase; part of the gene cluster that mediates the biosynthesis of fungal ergot alkaloid ergovaline, the predominant ergopeptine product in E.festucae var. lolii. DmaW catalyzes the first step of ergot alkaloid biosynthesis by condensing dimethylallyl diphosphate (DMAP) and tryptophan to form 4-dimethylallyl-L-tryptophan. The second step is catalyzed by the methyltransferase easF that methylates 4-dimethylallyl-L-tryptophan in the presence of S-adenosyl-L-methionine, resulting in the formation of 4-dimethylallyl-L-abrine. The catalase easC and the FAD-dependent oxidoreductase easE then transform 4-dimethylallyl-L-abrine to chanoclavine-I which is further oxidized by easD in the presence of NAD(+), resulting in the formation of chanoclavine-I aldehyde. Agroclavine dehydrogenase easG then mediates the conversion of chanoclavine-I aldehyde to agroclavine via a non-enzymatic adduct reaction: the substrate is an iminium intermediate that is formed spontaneously from chanoclavine-I aldehyde in the presence of glutathione. The presence of easA is not required to complete this reaction. Further conversion of agroclavine to paspalic acid is a two-step process involving oxidation of agroclavine to elymoclavine and of elymoclavine to paspalic acid, the second step being performed by the elymoclavine oxidase cloA. Paspalic acid is then further converted to D-lysergic acid. Ergovaline is assembled from D-lysergic acid and three different amino acids by the D-lysergyl-peptide-synthetase composed of a monomudular (lpsB) and a trimodular (lpsA) nonribosomal peptide synthetase subunit. This Epichloe festucae var. lolii (Neotyphodium lolii) protein is 4-dimethylallyltryptophan N-methyltransferase easF.